The chain runs to 320 residues: MQARLLIPILFSVFILSACGTLTGIPSHGGGKRFAVEQELVAASARAAVKDMDLQALHGRKVALYIATMGDQGSGSLTGGRYSIDALIRGEYINSPAVRTDYTYPRYETTAETTSGGLTGLTTSLSTLNAPALSRTQSDGSGSKSSLGLNIGGMGDYRNETLTTNPRDTAFLSHLVQTVFFLRGIDVVSPANADTDVFINIDVFGTIRNRTEMHLYNAETLKAQTKLEYFAVDRTNKKLLIKPKTNAFEAAYKENYALWMGPYKVSKGIKPTEGLMVDFSDIQPYGNHMGNSAPSVEADNSHEGYGYSDEAVRRHRQGQP.

Positions 1–18 (MQARLLIPILFSVFILSA) are cleaved as a signal peptide. A lipid anchor (N-palmitoyl cysteine) is attached at Cys-19. Cys-19 is lipidated: S-diacylglycerol cysteine. Positions 288–320 (HMGNSAPSVEADNSHEGYGYSDEAVRRHRQGQP) are disordered.

Belongs to the MafA family.

The protein resides in the cell outer membrane. This Neisseria meningitidis serogroup A / serotype 4A (strain DSM 15465 / Z2491) protein is Adhesin MafA 1 (mafA1).